We begin with the raw amino-acid sequence, 159 residues long: Phosphopantetheine adenylyltransferase (159 aa).

Thr-10 serves as a coordination point for substrate. Residues 10-11 and His-18 contribute to the ATP site; that span reads TF. Substrate-binding residues include Lys-42, Met-74, and Arg-88. Residues 89–91, Glu-99, and 124–130 contribute to the ATP site; these read GLR and WSFISSS.

It belongs to the bacterial CoaD family. Homohexamer. Requires Mg(2+) as cofactor.

It is found in the cytoplasm. The catalysed reaction is (R)-4'-phosphopantetheine + ATP + H(+) = 3'-dephospho-CoA + diphosphate. Its pathway is cofactor biosynthesis; coenzyme A biosynthesis; CoA from (R)-pantothenate: step 4/5. Functionally, reversibly transfers an adenylyl group from ATP to 4'-phosphopantetheine, yielding dephospho-CoA (dPCoA) and pyrophosphate. This Enterobacter sp. (strain 638) protein is Phosphopantetheine adenylyltransferase.